The sequence spans 472 residues: Ulvan lyase (472 aa).

The N-terminal stretch at 1–21 (MIIKQYLLKISLCVLLLGCDS) is a signal peptide. Residues Asn46 and Asn109 each coordinate substrate. Residue His110 is the Proton donor of the active site. Residues Lys112 and His130 each contribute to the substrate site. Tyr175 functions as the Proton acceptor in the catalytic mechanism. Residues Arg191, His195, and Tyr233 each coordinate substrate. Residue His195 participates in Zn(2+) binding. Residues His251, Cys253, and His265 each coordinate Zn(2+). Substrate is bound at residue His265.

Belongs to the polysaccharide lyase 25 family.

Functionally, ulvan lyase involved in ulvan degradation. Ulvan is the main polysaccharide component of the Ulvales (green seaweed) cell wall. It is composed of disaccharide building blocks comprising 3-sulfated rhamnose (Rha3S) linked to D-glucuronic acid (GlcA), L-iduronic acid (IduA), or D-xylose (Xyl). Ulvan lyase catalyzes the endolytic cleavage of the glycosidic bond between Rha3S and the uronic acids GlcA or IduA, producing oligosaccharides that have unsaturated 4-deoxy-L-threo-hex-4-enopyranosiduronic acid (deltaUA) at the non-reducing end. This results eventually in the degradation of the ulvan polysaccharide into deltaUA-Rha3S disaccharides and deltaUA-Rha3S-Xyl-Rha3S tetrasaccharides. The sequence is that of Ulvan lyase from Nonlabens ulvanivorans (Persicivirga ulvanivorans).